A 202-amino-acid chain; its full sequence is Na(+)-translocating NADH-quinone reductase subunit E (202 aa).

6 helical membrane-spanning segments follow: residues 11–31, 35–55, 81–101, 114–134, 144–164, and 180–200; these read SVFIENMALAFFLGMCTFIAI, VETAIGLGIAVVVVQAITVPA, FLGFLSYIGVIAAIVQILEML, GIYLPLITVNCAIMAGSLFMV, VVYGIGSGFSWALAIALLAGI, and LGIAFITIGLMSLGFMSFSGI.

Belongs to the NqrDE/RnfAE family. Composed of six subunits; NqrA, NqrB, NqrC, NqrD, NqrE and NqrF.

It is found in the cell inner membrane. The catalysed reaction is a ubiquinone + n Na(+)(in) + NADH + H(+) = a ubiquinol + n Na(+)(out) + NAD(+). In terms of biological role, NQR complex catalyzes the reduction of ubiquinone-1 to ubiquinol by two successive reactions, coupled with the transport of Na(+) ions from the cytoplasm to the periplasm. NqrA to NqrE are probably involved in the second step, the conversion of ubisemiquinone to ubiquinol. This is Na(+)-translocating NADH-quinone reductase subunit E from Azotobacter vinelandii (strain DJ / ATCC BAA-1303).